The following is a 163-amino-acid chain: Glutathione peroxidase-like peroxiredoxin HYR1 (163 aa).

Cys-36 (cysteine sulfenic acid (-SOH) intermediate) is an active-site residue. Cys-36 and Cys-82 are disulfide-bonded.

This sequence belongs to the glutathione peroxidase family. In terms of assembly, interacts with YAP1 and probably YBP1.

The protein localises to the cytoplasm. The protein resides in the mitochondrion intermembrane space. It localises to the peroxisome matrix. It catalyses the reaction a hydroperoxide + [thioredoxin]-dithiol = an alcohol + [thioredoxin]-disulfide + H2O. Involved in oxidative stress response and redox homeostasis. Functions as a sensor and transducer of hydroperoxide stress. In response to hydroperoxide stress it oxidizes (activates) the transcription activator YAP1, which is involved in transcription activation of genes of the oxidative stress response pathway. May also play a direct role in hydroperoxide scavenging, being the most active of three closely related S.cerevisiae peroxiredoxins (GPX1, GPX2, and HYR1/GPX3) with respect to peroxide and lipid hydroperoxide reduction. The three enzymes are not required for the glutaredoxin-mediated antioxidant function. In the presence of peroxides, HYR1/GPX3 is directly oxidized at Cys-36 to form a cysteine sulfenic acid (-SOH). Cys-36-SOH then forms either an intramolecular disulfide bond (Cys-36 with Cys-82) or a transient, intermolecular disulfide bond with 'Cys-598' of YAP1, which is further resolved into a YAP1 intramolecular disulfide bond ('Cys-303' with 'Cys-598'), which causes its nuclear accumulation and activation, and a reduced Cys-36 in HYR1/GPX3. The protein is Glutathione peroxidase-like peroxiredoxin HYR1 of Saccharomyces cerevisiae (strain ATCC 204508 / S288c) (Baker's yeast).